A 269-amino-acid chain; its full sequence is Glutamate racemase (269 aa).

Residues 11-12 (DS) and 43-44 (YG) contribute to the substrate site. The Proton donor/acceptor role is filled by Cys74. 75–76 (NT) provides a ligand contact to substrate. The active-site Proton donor/acceptor is Cys185. 186-187 (TH) is a substrate binding site.

It belongs to the aspartate/glutamate racemases family.

The enzyme catalyses L-glutamate = D-glutamate. It participates in cell wall biogenesis; peptidoglycan biosynthesis. Provides the (R)-glutamate required for cell wall biosynthesis. The chain is Glutamate racemase from Bacillus cereus (strain G9842).